Consider the following 321-residue polypeptide: Nucleotide-binding protein GOX0815 (321 aa).

27-34 (GLSGAGKS) contacts ATP. 72-75 (DVRS) is a binding site for GTP.

Belongs to the RapZ-like family.

Its function is as follows. Displays ATPase and GTPase activities. The polypeptide is Nucleotide-binding protein GOX0815 (Gluconobacter oxydans (strain 621H) (Gluconobacter suboxydans)).